A 540-amino-acid polypeptide reads, in one-letter code: Upstream-binding protein 1 (540 aa).

The residue at position 22 (serine 22) is a Phosphoserine. One can recognise a Grh/CP2 DB domain in the interval 60 to 296 (EHPPFQYVMC…EQKKSSKRTL (237 aa)). Disordered regions lie at residues 236–270 (KPKG…DTTI) and 285–368 (EHEQ…QPSA). Residues 238–262 (KGADRKQKTDREKMEKRTAHEKEKY) show a composition bias toward basic and acidic residues. Positions 320–368 (YVNNSPSPAPTFTSPQQSTCSVPDSNSSSPNHQGDGASQTSGEQIQPSA) are enriched in polar residues. Phosphoserine is present on residues serine 390 and serine 393.

Belongs to the grh/CP2 family. CP2 subfamily. In terms of assembly, interacts with TFCP2. Interacts with PIAS1, and is probably part of a complex containing TFCP2, UBP1 and PIAS1. In terms of tissue distribution, expressed in adrenal tissue, JEG-3, NCI-H295A, Hep-G2 and HeLa cell lines.

It is found in the nucleus. Functions as a transcriptional activator in a promoter context-dependent manner. Modulates the placental expression of CYP11A1. Involved in regulation of the alpha-globin gene in erythroid cells. Activation of the alpha-globin promoter in erythroid cells is via synergistic interaction with TFCP2. Involved in regulation of the alpha-globin gene in erythroid cells. Binds strongly to sequences around the HIV-1 initiation site and weakly over the TATA-box. Represses HIV-1 transcription by inhibiting the binding of TFIID to the TATA-box. In Homo sapiens (Human), this protein is Upstream-binding protein 1 (UBP1).